The chain runs to 345 residues: D(2) dopamine receptor B (345 aa).

The Extracellular segment spans residues glutamate 1–aspartate 10. An intrachain disulfide couples cysteine 9 to cysteine 84. The helical transmembrane segment at isoleucine 11–isoleucine 32 threads the bilayer. The Cytoplasmic segment spans residues aspartate 33 to arginine 53. A helical membrane pass occupies residues valine 54–phenylalanine 74. Residues glycine 75–alanine 90 lie on the Extracellular side of the membrane. Asparagine 77 carries N-linked (GlcNAc...) asparagine glycosylation. Residues phenylalanine 91–tyrosine 115 form a helical membrane-spanning segment. Residues isoleucine 116–glutamine 275 lie on the Cytoplasmic side of the membrane. Over residues lysine 166–aspartate 177 the composition is skewed to basic and acidic residues. The disordered stretch occupies residues lysine 166–proline 199. Residues methionine 276 to leucine 297 traverse the membrane as a helical segment. Residues asparagine 298–serine 311 are Extracellular-facing. Cysteine 301 and cysteine 303 are oxidised to a cystine. Residues alanine 312 to valine 333 form a helical membrane-spanning segment. At glutamate 334–cysteine 345 the chain is on the cytoplasmic side. Cysteine 345 carries S-palmitoyl cysteine lipidation.

It belongs to the G-protein coupled receptor 1 family. Post-translationally, palmitoylated. Palmitoylation is probably required for proper localization to the plasma membrane and stability of the receptor. In terms of tissue distribution, brain; pituitary.

The protein localises to the cell membrane. Its subcellular location is the golgi apparatus membrane. This is one of the five types (D1 to D5) of receptors for dopamine. The activity of this receptor is mediated by G proteins which inhibits adenylyl cyclase. In Xenopus D2R is involved in the regulation of the melanotrope cells of the intermediate pituitary during background adaptation of the animal. This Xenopus laevis (African clawed frog) protein is D(2) dopamine receptor B (drd2-b).